Consider the following 581-residue polypeptide: NADH-quinone oxidoreductase subunit C/D (581 aa).

The tract at residues 1–172 (MSGAELISDL…PPFVMTAARF (172 aa)) is NADH dehydrogenase I subunit C. The NADH dehydrogenase I subunit D stretch occupies residues 196-581 (ELMILNYGPH…IDYVMSDVDR (386 aa)).

The protein in the N-terminal section; belongs to the complex I 30 kDa subunit family. In the C-terminal section; belongs to the complex I 49 kDa subunit family. As to quaternary structure, NDH-1 is composed of 13 different subunits. Subunits NuoB, CD, E, F, and G constitute the peripheral sector of the complex.

It localises to the cell inner membrane. The catalysed reaction is a quinone + NADH + 5 H(+)(in) = a quinol + NAD(+) + 4 H(+)(out). Functionally, NDH-1 shuttles electrons from NADH, via FMN and iron-sulfur (Fe-S) centers, to quinones in the respiratory chain. The immediate electron acceptor for the enzyme in this species is believed to be ubiquinone. Couples the redox reaction to proton translocation (for every two electrons transferred, four hydrogen ions are translocated across the cytoplasmic membrane), and thus conserves the redox energy in a proton gradient. The sequence is that of NADH-quinone oxidoreductase subunit C/D from Rhodopseudomonas palustris (strain BisA53).